A 131-amino-acid chain; its full sequence is Small ribosomal subunit protein bS16 (131 aa).

A compositionally biased stretch (basic and acidic residues) spans 87 to 117 (IGKSKQEELRKSEAKTSAKNKKANEEKANEE). The disordered stretch occupies residues 87–131 (IGKSKQEELRKSEAKTSAKNKKANEEKANEEKVEESETLEASSEA).

Belongs to the bacterial ribosomal protein bS16 family.

The protein is Small ribosomal subunit protein bS16 of Prochlorococcus marinus (strain SARG / CCMP1375 / SS120).